We begin with the raw amino-acid sequence, 199 residues long: Imidazoleglycerol-phosphate dehydratase (199 aa).

The protein belongs to the imidazoleglycerol-phosphate dehydratase family.

Its subcellular location is the cytoplasm. It catalyses the reaction D-erythro-1-(imidazol-4-yl)glycerol 3-phosphate = 3-(imidazol-4-yl)-2-oxopropyl phosphate + H2O. It participates in amino-acid biosynthesis; L-histidine biosynthesis; L-histidine from 5-phospho-alpha-D-ribose 1-diphosphate: step 6/9. This chain is Imidazoleglycerol-phosphate dehydratase, found in Lactococcus lactis subsp. cremoris (strain MG1363).